A 360-amino-acid polypeptide reads, in one-letter code: MLIWLADWLTQFDSGFNVFSYLTLRAILSTLTALLIAILIGPKMIRYLQRMQIGQTVRDDGPQSHLSKSGTPTMGGLLILAAIVVSGLLWADLTNRYVLVTLTVVVAYGIIGFVDDYRKVIRKDSKGLIARWKYFWQSVVALGVAFYLYSSATMSAETSLLVPFFKEVFPQLGIFFIIITYFAIVGTSNAVNLTDGLDGLAIVPTILVAGAFAIFAYVTGNANFAEYLNIPHIPLTSELVIVCTAMVGAGLGFLWFNTYPAQVFMGDVGSLALGGTLGVLAVLVRQELVLIIMGGVFVMETLSVILQVGSYKLRGQRIFRMAPIHHHYELKGWPEPRVIVRFWIISIILVLVGLATLKLR.

A run of 10 helical transmembrane segments spans residues 21 to 41, 73 to 93, 97 to 117, 134 to 154, 168 to 188, 199 to 219, 239 to 259, 263 to 283, 288 to 308, and 338 to 358; these read YLTLRAILSTLTALLIAILIG, TMGGLLILAAIVVSGLLWADL, YVLVTLTVVVAYGIIGFVDDY, YFWQSVVALGVAFYLYSSATM, VFPQLGIFFIIITYFAIVGTS, GLAIVPTILVAGAFAIFAYVT, LVIVCTAMVGAGLGFLWFNTY, VFMGDVGSLALGGTLGVLAVL, LVLIIMGGVFVMETLSVILQV, and VIVRFWIISIILVLVGLATLK.

It belongs to the glycosyltransferase 4 family. MraY subfamily. It depends on Mg(2+) as a cofactor.

Its subcellular location is the cell inner membrane. The enzyme catalyses UDP-N-acetyl-alpha-D-muramoyl-L-alanyl-gamma-D-glutamyl-meso-2,6-diaminopimeloyl-D-alanyl-D-alanine + di-trans,octa-cis-undecaprenyl phosphate = di-trans,octa-cis-undecaprenyl diphospho-N-acetyl-alpha-D-muramoyl-L-alanyl-D-glutamyl-meso-2,6-diaminopimeloyl-D-alanyl-D-alanine + UMP. It functions in the pathway cell wall biogenesis; peptidoglycan biosynthesis. Catalyzes the initial step of the lipid cycle reactions in the biosynthesis of the cell wall peptidoglycan: transfers peptidoglycan precursor phospho-MurNAc-pentapeptide from UDP-MurNAc-pentapeptide onto the lipid carrier undecaprenyl phosphate, yielding undecaprenyl-pyrophosphoryl-MurNAc-pentapeptide, known as lipid I. This Alteromonas mediterranea (strain DSM 17117 / CIP 110805 / LMG 28347 / Deep ecotype) protein is Phospho-N-acetylmuramoyl-pentapeptide-transferase.